The chain runs to 403 residues: Acetate kinase (403 aa).

Asparagine 7 lines the Mg(2+) pocket. Lysine 14 serves as a coordination point for ATP. Substrate is bound at residue arginine 90. Aspartate 147 serves as the catalytic Proton donor/acceptor. Residues 207 to 211, 283 to 285, and 331 to 335 each bind ATP; these read HIGNG, DMR, and GVGEN. Glutamate 386 serves as a coordination point for Mg(2+).

It belongs to the acetokinase family. Homodimer. Mg(2+) is required as a cofactor. The cofactor is Mn(2+).

It is found in the cytoplasm. The enzyme catalyses acetate + ATP = acetyl phosphate + ADP. Its pathway is metabolic intermediate biosynthesis; acetyl-CoA biosynthesis; acetyl-CoA from acetate: step 1/2. Catalyzes the formation of acetyl phosphate from acetate and ATP. Can also catalyze the reverse reaction. The protein is Acetate kinase of Thermotoga petrophila (strain ATCC BAA-488 / DSM 13995 / JCM 10881 / RKU-1).